The sequence spans 116 residues: CDKN2AIP N-terminal-like protein (116 aa).

Position 1 is an N-acetylmethionine (M1). An XRN2-binding (XTBD) domain is found at 24–116; it reads AEQFRSYSES…RSELMRKHQS (93 aa).

It belongs to the CARF family. Interacts with XRN2; the interaction is direct.

This is CDKN2AIP N-terminal-like protein (Cdkn2aipnl) from Mus musculus (Mouse).